We begin with the raw amino-acid sequence, 101 residues long: Urease subunit beta (101 aa).

It belongs to the urease beta subunit family. Heterotrimer of UreA (gamma), UreB (beta) and UreC (alpha) subunits. Three heterotrimers associate to form the active enzyme.

Its subcellular location is the cytoplasm. It carries out the reaction urea + 2 H2O + H(+) = hydrogencarbonate + 2 NH4(+). Its pathway is nitrogen metabolism; urea degradation; CO(2) and NH(3) from urea (urease route): step 1/1. This is Urease subunit beta from Rhizobium etli (strain CIAT 652).